The following is a 263-amino-acid chain: 5'-nucleotidase SurE (263 aa).

Positions 10, 11, 41, and 95 each coordinate a divalent metal cation.

Belongs to the SurE nucleotidase family. The cofactor is a divalent metal cation.

It is found in the cytoplasm. It carries out the reaction a ribonucleoside 5'-phosphate + H2O = a ribonucleoside + phosphate. Nucleotidase that shows phosphatase activity on nucleoside 5'-monophosphates. This Methanoculleus marisnigri (strain ATCC 35101 / DSM 1498 / JR1) protein is 5'-nucleotidase SurE.